The sequence spans 82 residues: DNA-directed RNA polymerase subunit Rpo5 (82 aa).

The protein belongs to the archaeal Rpo5/eukaryotic RPB5 RNA polymerase subunit family. In terms of assembly, part of the RNA polymerase complex.

It is found in the cytoplasm. It carries out the reaction RNA(n) + a ribonucleoside 5'-triphosphate = RNA(n+1) + diphosphate. Its function is as follows. DNA-dependent RNA polymerase (RNAP) catalyzes the transcription of DNA into RNA using the four ribonucleoside triphosphates as substrates. The polypeptide is DNA-directed RNA polymerase subunit Rpo5 (Thermococcus onnurineus (strain NA1)).